The following is a 476-amino-acid chain: Proton-coupled amino acid transporter 1 (476 aa).

Basic and acidic residues predominate over residues Met-1 to Ser-15. The tract at residues Met-1–Leu-32 is disordered. Residues Met-1–Gln-51 are Cytoplasmic-facing. Residues Thr-52–Val-72 form a helical membrane-spanning segment. The Extracellular segment spans residues Lys-73 to Val-78. A helical transmembrane segment spans residues Met-79–Val-99. At Lys-100–Arg-141 the chain is on the cytoplasmic side. A helical transmembrane segment spans residues Val-142–Leu-162. Over Ala-163–Pro-190 the chain is Extracellular. Residues Asn-174 and Asn-183 are each glycosylated (N-linked (GlcNAc...) asparagine). Cys-180 and Cys-329 are oxidised to a cystine. A helical transmembrane segment spans residues Thr-191 to Ile-211. Residues Arg-212–Arg-215 are Cytoplasmic-facing. A helical membrane pass occupies residues Ala-216–Tyr-236. Topologically, residues Gln-237–Thr-257 are extracellular. Residues Tyr-258–Leu-278 traverse the membrane as a helical segment. Over Glu-279–Pro-289 the chain is Cytoplasmic. Residues Leu-290–Gly-310 traverse the membrane as a helical segment. The Extracellular portion of the chain corresponds to Tyr-311–Gly-342. The helical transmembrane segment at Ile-343–Val-363 threads the bilayer. The Cytoplasmic segment spans residues Ser-364–Leu-372. Residues Val-373–Ile-393 form a helical membrane-spanning segment. Over Pro-394–Asp-397 the chain is Extracellular. Residues Leu-398–Leu-418 traverse the membrane as a helical segment. The Cytoplasmic portion of the chain corresponds to Leu-419–Leu-439. The helical transmembrane segment at Ile-440–Ile-460 threads the bilayer. Topologically, residues Gln-461 to Ile-476 are extracellular. A glycan (N-linked (GlcNAc...) asparagine) is linked at Asn-470.

The protein belongs to the amino acid/polyamine transporter 2 family.

Its subcellular location is the cell membrane. The protein resides in the apical cell membrane. It localises to the lysosome membrane. It carries out the reaction glycine(in) + H(+)(in) = glycine(out) + H(+)(out). The catalysed reaction is L-alanine(in) + H(+)(in) = L-alanine(out) + H(+)(out). The enzyme catalyses D-alanine(in) + H(+)(in) = D-alanine(out) + H(+)(out). It catalyses the reaction L-proline(out) + H(+)(out) = L-proline(in) + H(+)(in). It carries out the reaction D-proline(out) + H(+)(out) = D-proline(in) + H(+)(in). The catalysed reaction is D-serine(out) + H(+)(out) = D-serine(in) + H(+)(in). The enzyme catalyses L-serine(in) + H(+)(in) = L-serine(out) + H(+)(out). It catalyses the reaction 4-aminobutanoate(in) + H(+)(in) = 4-aminobutanoate(out) + H(+)(out). It carries out the reaction beta-alanine(in) + H(+)(in) = beta-alanine(out) + H(+)(out). Functionally, electrogenic proton/amino acid symporter with selectivity for small apolar L-amino acids, their D-enantiomers and selected amino acid derivatives such as 4-aminobutanoate/GABA. May be involved in the efflux from the lysosomal compartment of neutral amino acids resulting from proteolysis. May play a role in specifying sites for exocytosis in neurons. The chain is Proton-coupled amino acid transporter 1 from Homo sapiens (Human).